The chain runs to 259 residues: MNILAPVRRDRVLAELPQCLRKEAALHGHKDFHPRVTCACQEHRTGTVGFKISKVIVVGDLSVGKTCLINRFCKDTFDKNYKATIGVDFEMERFEVLGIPFSLQLWDTAGQERFKCIASTYYRGAQAIIIVFNLNDVASLEHTKQWLADALKENDPSSVLLFLVGSKKDLSTPAQYALMEKDALQVAQEMKAEYWAVSSLTGENVREFFFRVAALTFEANVLAELEKSGARRIGDVVRINSDDSNLYLTASKKKPTCCP.

At Met1 the chain carries N-acetylmethionine. Residues Ser62, Val63, Gly64, Lys65, Thr66, Asp78, Tyr81, and Thr84 each coordinate GTP. Residue Thr66 coordinates Mg(2+). The Switch 1 motif lies at Arg71 to Phe89. 2 residues coordinate Mg(2+): Thr84 and Asp107. The Switch 2 motif lies at Thr108–Ala127. Gly110, Lys167, Asp169, and Ser198 together coordinate GTP. 2 positions are modified to phosphoserine: Ser241 and Ser244. 2 S-geranylgeranyl cysteine lipidation sites follow: Cys257 and Cys258.

The protein belongs to the small GTPase superfamily. Rab family. In terms of assembly, interacts with RILP. The GTP-bound form interacts with REP15. Mg(2+) is required as a cofactor.

It localises to the cytoplasm. Its subcellular location is the golgi apparatus. It is found in the cytoplasmic vesicle. The protein resides in the phagosome. The protein localises to the phagosome membrane. It localises to the cell projection. Its subcellular location is the cilium. It is found in the cytoskeleton. The protein resides in the microtubule organizing center. The protein localises to the centrosome. It localises to the centriole. The catalysed reaction is GTP + H2O = GDP + phosphate + H(+). Its activity is regulated as follows. Regulated by guanine nucleotide exchange factors (GEFs) which promote the exchange of bound GDP for free GTP. Regulated by GTPase activating proteins (GAPs) which increase the GTP hydrolysis activity. Inhibited by GDP dissociation inhibitors (GDIs). Its function is as follows. The small GTPases Rab are key regulators of intracellular membrane trafficking, from the formation of transport vesicles to their fusion with membranes. Rabs cycle between an inactive GDP-bound form and an active GTP-bound form that is able to recruit to membranes different sets of downstream effectors directly responsible for vesicle formation, movement, tethering and fusion. RAB34 transports protein involved in the redistribution of lysosomes to the peri-Golgi region. Plays a role in the maturation of phagosomes that engulf pathogens, such as S.aureus and M.tuberculosis. Plays a role in the fusion of phagosomes with lysosomes. Involved in ciliogenesis. In particular, it is required for early steps of the intracellular cilium assembly pathway initiated by trafficking and docking of ciliary vesicles to the centrioles in the cytoplasm, followed by axoneme formation in the cytoplasm. After axoneme elongation, the centrioles migrate close to the cell surface so that ciliary vesicles can fuse with the plasma membrane to expose cilia to the extracellular space. It seems dispensable for ciliogenesis via the extracellular pathway where cilium assembly begins after migration and docking of the centriole to the plasma membrane. Also acts as a positive regulator of hedgehog signaling and regulates ciliary function. In Homo sapiens (Human), this protein is Ras-related protein Rab-34.